Here is a 254-residue protein sequence, read N- to C-terminus: 5'-nucleotidase SurE (254 aa).

A divalent metal cation contacts are provided by D8, D9, S39, and N97.

It belongs to the SurE nucleotidase family. A divalent metal cation is required as a cofactor.

The protein resides in the cytoplasm. It catalyses the reaction a ribonucleoside 5'-phosphate + H2O = a ribonucleoside + phosphate. Nucleotidase that shows phosphatase activity on nucleoside 5'-monophosphates. The sequence is that of 5'-nucleotidase SurE from Alkaliphilus metalliredigens (strain QYMF).